The chain runs to 695 residues: DSC E3 ubiquitin ligase complex subunit 1 (695 aa).

Positions 1–25 (MDRRRWVPSTPVVTLLLLFMLFAPA) are cleaved as a signal peptide. Residues 26-319 (PRLPSRNGES…KGPRNFVLEN (294 aa)) lie on the Lumenal side of the membrane. A helical membrane pass occupies residues 320–340 (HLVRFSSLYIFIVLSQIFVLL). Residues 341–353 (RQMRINSPSHVQR) lie on the Cytoplasmic side of the membrane. Residues 354 to 374 (LSFLTIAMQAGLDAYIAIFFL) form a helical membrane-spanning segment. The Lumenal portion of the chain corresponds to 375-382 (STNAVIEK). A helical transmembrane segment spans residues 383–403 (GYLPFVSVAFLSLVPSVMFTM). The Cytoplasmic segment spans residues 404-486 (RYLALILRVQ…QRDWSAVCLR (83 aa)). Positions 419-473 (PPAPRPVTNNSSNNNTNQSNASNENSPNAPSAANDNTETTTVNPPQEDDQPMTQH) are disordered. Residues 427–454 (NNSSNNNTNQSNASNENSPNAPSAANDN) are compositionally biased toward low complexity. The helical transmembrane segment at 487–507 (FYFIILVVCIASLYSAFWPVI) threads the bilayer. Over 508 to 509 (YR) the chain is Lumenal. The helical transmembrane segment at 510 to 530 (FYFISALIFTSYSFWIPQIIQ) threads the bilayer. Residues 531-540 (NVKQGTSRSF) are Cytoplasmic-facing. Residues 541-561 (TWTYILGASVLRLYLPLAIFI) traverse the membrane as a helical segment. The Lumenal segment spans residues 562–572 (DSELILGFPPK). Residues 573–593 (YFFALGLVLWMLFQVLVLLVQ) form a helical membrane-spanning segment. At 594–695 (DTLGPRFFLP…PVCRCHLPAV (102 aa)) the chain is on the cytoplasmic side. The segment at 634–689 (CPICMQPIELVSTGSTLNPASMMVRRNYMLTPCHHLYHRQCLLQWMETRSICPVCR) adopts an RING-type; atypical zinc-finger fold.

In terms of assembly, component of the DSC E3 ubiquitin ligase complex composed of dsc1, dsc2, dsc3 and dsc4.

It is found in the endoplasmic reticulum membrane. The protein localises to the golgi apparatus membrane. It catalyses the reaction S-ubiquitinyl-[E2 ubiquitin-conjugating enzyme]-L-cysteine + [acceptor protein]-L-lysine = [E2 ubiquitin-conjugating enzyme]-L-cysteine + N(6)-ubiquitinyl-[acceptor protein]-L-lysine.. It functions in the pathway protein modification; protein ubiquitination. Catalytic component of the DSC E3 ubiquitin ligase complex which is required for the sre1 transcriptional activator proteolytic cleavage to release the soluble transcription factor from the membrane in low oxygen or sterol conditions. The complex also plays an important role in the multivesicular body (MVB) pathway and functions in a post-endoplasmic reticulum pathway for protein degradation. The chain is DSC E3 ubiquitin ligase complex subunit 1 (dsc1) from Schizosaccharomyces pombe (strain 972 / ATCC 24843) (Fission yeast).